The sequence spans 520 residues: Maturase K (520 aa).

This sequence belongs to the intron maturase 2 family. MatK subfamily.

It is found in the plastid. The protein resides in the chloroplast. Usually encoded in the trnK tRNA gene intron. Probably assists in splicing its own and other chloroplast group II introns. The polypeptide is Maturase K (Beaucarnea recurvata (Elephant-foot tree)).